The primary structure comprises 164 residues: Sorting nexin-3 (164 aa).

A PX domain is found at 40–163; the sequence is EIEVCNPKTH…VRFIQDPTFQ (124 aa). 5 residues coordinate a 1,2-diacyl-sn-glycero-3-phospho-(1D-myo-inositol-3-phosphate): arginine 83, serine 85, lysine 114, arginine 120, and arginine 129.

The protein belongs to the sorting nexin family.

The protein resides in the cytoplasm. The protein localises to the golgi apparatus membrane. Its subcellular location is the prevacuolar compartment membrane. Required for retention of late Golgi membrane proteins. Component of the retrieval machinery that functions by direct interaction with the cytosolic tails of certain TGN membrane proteins during the sorting/budding process at the prevacuolar compartment. Binds phosphatidylinositol 3-phosphate (PtdIns(P3)). This is Sorting nexin-3 (SNX3) from Kluyveromyces lactis (strain ATCC 8585 / CBS 2359 / DSM 70799 / NBRC 1267 / NRRL Y-1140 / WM37) (Yeast).